A 217-amino-acid chain; its full sequence is MSKTVRTLALGGLVLAGLSACVSVPRGQGSGAAVVDHVSDSARQAEAARQAWLQAHPHWSFQGRVAISKDRNGGSGRIDWQQDGPRYRVQLSAPVTRQSWVLTGDTTSGAGRLEGLEGGPRSGPDAEQVLLEATGWTIPVNQMPDWVRALRIAGAGAARVDLDAAGRPRTVQQDGWTIDFLAWTPASAEQPELPQRIEARSGEAKVRLLVDQWTVSP.

The first 20 residues, methionine 1 to alanine 20, serve as a signal peptide directing secretion. A lipid anchor (N-palmitoyl cysteine) is attached at cysteine 21. Cysteine 21 carries S-diacylglycerol cysteine lipidation. The interval aspartate 105 to proline 124 is disordered.

The protein belongs to the LolB family. Monomer.

It is found in the cell outer membrane. Functionally, plays a critical role in the incorporation of lipoproteins in the outer membrane after they are released by the LolA protein. This is Outer-membrane lipoprotein LolB from Xanthomonas axonopodis pv. citri (strain 306).